An 89-amino-acid polypeptide reads, in one-letter code: Glutamyl-tRNA(Gln) amidotransferase subunit C (89 aa).

The protein belongs to the GatC family. In terms of assembly, heterotrimer of A, B and C subunits.

The enzyme catalyses L-glutamyl-tRNA(Gln) + L-glutamine + ATP + H2O = L-glutaminyl-tRNA(Gln) + L-glutamate + ADP + phosphate + H(+). It catalyses the reaction L-aspartyl-tRNA(Asn) + L-glutamine + ATP + H2O = L-asparaginyl-tRNA(Asn) + L-glutamate + ADP + phosphate + 2 H(+). In terms of biological role, allows the formation of correctly charged Asn-tRNA(Asn) or Gln-tRNA(Gln) through the transamidation of misacylated Asp-tRNA(Asn) or Glu-tRNA(Gln) in organisms which lack either or both of asparaginyl-tRNA or glutaminyl-tRNA synthetases. The reaction takes place in the presence of glutamine and ATP through an activated phospho-Asp-tRNA(Asn) or phospho-Glu-tRNA(Gln). In Thermus thermophilus (strain ATCC 27634 / DSM 579 / HB8), this protein is Glutamyl-tRNA(Gln) amidotransferase subunit C.